The primary structure comprises 407 residues: Glycolate oxidase iron-sulfur subunit (407 aa).

2 consecutive 4Fe-4S ferredoxin-type domains span residues 14-47 (RALE…ELDG) and 66-95 (LKTQ…HNLL). [4Fe-4S] cluster contacts are provided by Cys25, Cys28, Cys31, Cys35, Cys75, Cys78, Cys81, and Cys85.

As to quaternary structure, the glycolate oxidase likely consists of three subunits, GlcD, GlcE and GlcF. [4Fe-4S] cluster is required as a cofactor.

The protein localises to the cell inner membrane. It catalyses the reaction glycolate + A = glyoxylate + AH2. The catalysed reaction is (R)-lactate + A = pyruvate + AH2. With respect to regulation, in vitro the glycolate oxidase activity is inhibited by the sulfhydryl inhibitors CuSO4 and PCMB, by KCN, but not by the metal complexing agent EDTA. Its function is as follows. Component of a complex that catalyzes the oxidation of glycolate to glyoxylate. Is required for E.coli to grow on glycolate as a sole source of carbon. Is also able to oxidize D-lactate ((R)-lactate) with a similar rate. Does not link directly to O(2), and 2,6-dichloroindophenol (DCIP) and phenazine methosulfate (PMS) can act as artificial electron acceptors in vitro, but the physiological molecule that functions as a primary electron acceptor during glycolate oxidation is unknown. The sequence is that of Glycolate oxidase iron-sulfur subunit from Escherichia coli (strain K12).